The primary structure comprises 253 residues: NADH-quinone oxidoreductase subunit C (253 aa).

2 disordered regions span residues 1–33 (MSPDTPRGGDLHPPEPDAAATAGPEGTPPDTEP) and 234–253 (IPVEYKGARIPPPDERRAYS).

Belongs to the complex I 30 kDa subunit family. NDH-1 is composed of 14 different subunits. Subunits NuoB, C, D, E, F, and G constitute the peripheral sector of the complex.

It is found in the cell membrane. The enzyme catalyses a quinone + NADH + 5 H(+)(in) = a quinol + NAD(+) + 4 H(+)(out). Its function is as follows. NDH-1 shuttles electrons from NADH, via FMN and iron-sulfur (Fe-S) centers, to quinones in the respiratory chain. The immediate electron acceptor for the enzyme in this species is believed to be a menaquinone. Couples the redox reaction to proton translocation (for every two electrons transferred, four hydrogen ions are translocated across the cytoplasmic membrane), and thus conserves the redox energy in a proton gradient. In Nocardia farcinica (strain IFM 10152), this protein is NADH-quinone oxidoreductase subunit C.